A 140-amino-acid polypeptide reads, in one-letter code: Oocyte zinc finger protein XlCOF15 (140 aa).

5 consecutive C2H2-type zinc fingers follow at residues 6 to 28 (FTCK…QKIH), 34 to 56 (FTCT…QKVH), 62 to 84 (FICT…HVIH), 90 to 112 (FTCA…RAAH), and 118 to 140 (FICT…LKSH).

It belongs to the krueppel C2H2-type zinc-finger protein family.

Its subcellular location is the nucleus. Functionally, may be involved in transcriptional regulation. This chain is Oocyte zinc finger protein XlCOF15, found in Xenopus laevis (African clawed frog).